We begin with the raw amino-acid sequence, 1138 residues long: 2'-5'-oligoadenylate synthase 3 (1138 aa).

The residue at position 1 (M1) is an N-acetylmethionine. The OAS domain 1 stretch occupies residues 6-341 (TPAGALDKLV…GVLVQPWEGP (336 aa)). Interaction with dsRNA regions lie at residues 12-56 (DKLV…VIRI) and 185-199 (EPRK…AKLK). Residues 342–462 (GLPRAGILDL…GSRMSPDLSQ (121 aa)) form a linker region. A compositionally biased stretch (basic and acidic residues) spans 370–379 (LAVQSKERSQ). Disordered regions lie at residues 370–403 (LAVQ…NPSA) and 434–459 (TQST…MSPD). Residues 447 to 459 (SSISTAGSRMSPD) show a composition bias toward polar residues. OAS domain regions lie at residues 463-793 (IPSK…PWDV) and 801-1135 (TLAE…WPVK). Position 855 (S855) interacts with ATP. Positions 867, 869, and 939 each coordinate Mg(2+). Residues R998, K1001, and Q1020 each contribute to the ATP site.

The protein belongs to the 2-5A synthase family. As to quaternary structure, monomer. The cofactor is Mg(2+). Intestine.

It is found in the cytoplasm. It localises to the nucleus. The catalysed reaction is 3 ATP = 5'-triphosphoadenylyl-(2'-&gt;5')-adenylyl-(2'-&gt;5')-adenosine + 2 diphosphate. With respect to regulation, produced as a latent enzyme which is activated by dsRNA generated during the course of viral infection. Strongly activated by long dsRNAs at least 50 nucleotides in length. ssRNA does not activate the enzyme. Its function is as follows. Interferon-induced, dsRNA-activated antiviral enzyme which plays a critical role in cellular innate antiviral response. In addition, it may also play a role in other cellular processes such as apoptosis, cell growth, differentiation and gene regulation. Synthesizes preferentially dimers of 2'-5'-oligoadenylates (2-5A) from ATP which then bind to the inactive monomeric form of ribonuclease L (RNase L) leading to its dimerization and subsequent activation. Activation of RNase L leads to degradation of cellular as well as viral RNA, resulting in the inhibition of protein synthesis, thus terminating viral replication. Can mediate the antiviral effect via the classical RNase L-dependent pathway or an alternative antiviral pathway independent of RNase L. The chain is 2'-5'-oligoadenylate synthase 3 (Oas3) from Mus musculus (Mouse).